Consider the following 148-residue polypeptide: Small ribosomal subunit protein uS9 (148 aa).

The protein belongs to the universal ribosomal protein uS9 family.

In Aedes aegypti (Yellowfever mosquito), this protein is Small ribosomal subunit protein uS9 (RpS16).